The primary structure comprises 579 residues: Laccase-4 (579 aa).

Residues 1 to 28 form the signal peptide; it reads MTMAISSALPSPLLLAASLLLLIVQAQG. Plastocyanin-like domains lie at 36 to 152 and 162 to 316; these read NVQM…PKLG and KEVP…YENP. 2 N-linked (GlcNAc...) asparagine glycosylation sites follow: asparagine 41 and asparagine 82. Histidine 86 and histidine 88 together coordinate Cu cation. The N-linked (GlcNAc...) asparagine glycan is linked to asparagine 118. Histidine 131 and histidine 133 together coordinate Cu cation. Residues asparagine 191, asparagine 207, asparagine 243, asparagine 304, asparagine 340, asparagine 347, asparagine 386, asparagine 393, asparagine 403, asparagine 439, asparagine 446, and asparagine 462 are each glycosylated (N-linked (GlcNAc...) asparagine). The Plastocyanin-like 3 domain occupies 429–563; that stretch reads DFPVAPLSPF…RMAWLVLDGS (135 aa). Cu cation-binding residues include histidine 480, histidine 483, histidine 485, histidine 542, cysteine 543, histidine 544, and histidine 548.

It belongs to the multicopper oxidase family. The cofactor is Cu cation.

Its subcellular location is the secreted. It localises to the extracellular space. It is found in the apoplast. The catalysed reaction is 4 hydroquinone + O2 = 4 benzosemiquinone + 2 H2O. Lignin degradation and detoxification of lignin-derived products. In Oryza sativa subsp. japonica (Rice), this protein is Laccase-4 (LAC4).